We begin with the raw amino-acid sequence, 152 residues long: Ribonuclease H (152 aa).

An RNase H type-1 domain is found at 1–142; the sequence is MGSKVVIYTD…ADKLAVQGRE (142 aa). Mg(2+)-binding residues include D10, E48, D70, and D134.

The protein belongs to the RNase H family. As to quaternary structure, monomer. Mg(2+) is required as a cofactor.

It localises to the cytoplasm. It catalyses the reaction Endonucleolytic cleavage to 5'-phosphomonoester.. Endonuclease that specifically degrades the RNA of RNA-DNA hybrids. The chain is Ribonuclease H from Rickettsia massiliae (strain Mtu5).